Reading from the N-terminus, the 288-residue chain is Phosphatidylserine decarboxylase proenzyme (288 aa).

Residues aspartate 88, histidine 145, and serine 248 each act as charge relay system; for autoendoproteolytic cleavage activity in the active site. Serine 248 (schiff-base intermediate with substrate; via pyruvic acid; for decarboxylase activity) is an active-site residue. At serine 248 the chain carries Pyruvic acid (Ser); by autocatalysis.

Belongs to the phosphatidylserine decarboxylase family. PSD-B subfamily. Prokaryotic type I sub-subfamily. In terms of assembly, heterodimer of a large membrane-associated beta subunit and a small pyruvoyl-containing alpha subunit. The cofactor is pyruvate. In terms of processing, is synthesized initially as an inactive proenzyme. Formation of the active enzyme involves a self-maturation process in which the active site pyruvoyl group is generated from an internal serine residue via an autocatalytic post-translational modification. Two non-identical subunits are generated from the proenzyme in this reaction, and the pyruvate is formed at the N-terminus of the alpha chain, which is derived from the carboxyl end of the proenzyme. The autoendoproteolytic cleavage occurs by a canonical serine protease mechanism, in which the side chain hydroxyl group of the serine supplies its oxygen atom to form the C-terminus of the beta chain, while the remainder of the serine residue undergoes an oxidative deamination to produce ammonia and the pyruvoyl prosthetic group on the alpha chain. During this reaction, the Ser that is part of the protease active site of the proenzyme becomes the pyruvoyl prosthetic group, which constitutes an essential element of the active site of the mature decarboxylase.

Its subcellular location is the cell membrane. The enzyme catalyses a 1,2-diacyl-sn-glycero-3-phospho-L-serine + H(+) = a 1,2-diacyl-sn-glycero-3-phosphoethanolamine + CO2. The protein operates within phospholipid metabolism; phosphatidylethanolamine biosynthesis; phosphatidylethanolamine from CDP-diacylglycerol: step 2/2. Functionally, catalyzes the formation of phosphatidylethanolamine (PtdEtn) from phosphatidylserine (PtdSer). This Azoarcus sp. (strain BH72) protein is Phosphatidylserine decarboxylase proenzyme.